Consider the following 264-residue polypeptide: Elongation factor Ts (264 aa).

An involved in Mg(2+) ion dislocation from EF-Tu region spans residues 76–79; that stretch reads TDFV.

This sequence belongs to the EF-Ts family.

The protein resides in the cytoplasm. Associates with the EF-Tu.GDP complex and induces the exchange of GDP to GTP. It remains bound to the aminoacyl-tRNA.EF-Tu.GTP complex up to the GTP hydrolysis stage on the ribosome. The polypeptide is Elongation factor Ts (Deinococcus deserti (strain DSM 17065 / CIP 109153 / LMG 22923 / VCD115)).